An 82-amino-acid polypeptide reads, in one-letter code: Small ribosomal subunit protein bS16 (82 aa).

This sequence belongs to the bacterial ribosomal protein bS16 family.

The chain is Small ribosomal subunit protein bS16 from Photorhabdus laumondii subsp. laumondii (strain DSM 15139 / CIP 105565 / TT01) (Photorhabdus luminescens subsp. laumondii).